A 53-amino-acid chain; its full sequence is Conotoxin Cal6.31 (53 aa).

A signal peptide spans 1-24; that stretch reads MKLTCVLIAAVLLLAVCQLDSADA. Disulfide bonds link C29–C43, C36–C47, and C42–C51.

Belongs to the conotoxin O1 superfamily. In terms of tissue distribution, expressed by the venom duct.

The protein localises to the secreted. Its function is as follows. Probable neurotoxin. The protein is Conotoxin Cal6.31 of Californiconus californicus (California cone).